The sequence spans 1098 residues: Beta-alanine-activating enzyme (1098 aa).

Residues 198–206, Asp428, Arg442, and Lys527 each bind ATP; that span reads TSGTTGIPK. One can recognise a Carrier domain in the interval 553–630; it reads EDLWEKLQYL…EIYNHILQTV (78 aa). Ser589 carries the O-(pantetheine 4'-phosphoryl)serine modification. Phosphoserine occurs at positions 649 and 724.

Belongs to the ATP-dependent AMP-binding enzyme family. As to expression, ubiquitously expressed in adult tissues.

Covalently binds beta-alanine in an ATP-dependent manner to form a thioester bond with its phosphopantetheine group and transfers it to an, as yet, unknown acceptor. May be required for a post-translational protein modification or for post-transcriptional modification of an RNA. The sequence is that of Beta-alanine-activating enzyme (AASDH) from Homo sapiens (Human).